The primary structure comprises 219 residues: Large ribosomal subunit protein uL16 (219 aa).

This sequence belongs to the universal ribosomal protein uL16 family. Component of the small ribosomal subunit. Mature ribosomes consist of a small (40S) and a large (60S) subunit. The 40S subunit contains about 33 different proteins and 1 molecule of RNA (18S). The 60S subunit contains about 49 different proteins and 3 molecules of RNA (25S, 5.8S and 5S).

This Solanum melongena (Eggplant) protein is Large ribosomal subunit protein uL16 (RPL10).